Here is a 481-residue protein sequence, read N- to C-terminus: MVQLNQNFINTIAQELPAHLSMDDFIAACSRPLRRSIRVNTLKISSEDFKQLMQPKGWTFDPIPWCEDGFWISYDEEEQLGNALEHIQGLFYIQEASSMLPPTALFTPNADWQCVLDLASAPGSKTTQMAALMNNQGLLVANEYSASRVKVLHANVLRMGASHCALTHFDGRVFGEYLYESFDAVLIDAPCGGEGIVRKDADALKSWSLDEVLEISETQKALIESAFLALKPGGSLVYSTCTLNRHENQGVCEYLQQTYGDAVQFESLNQLFDGAEKATTPEGFLHVWPQIYDSEGFFVAKLTKTRSVPRLQPEPKLQKNFPFTEASAKQAKAIQAYFADDLGIELPDDLIMVRDDEFWLFPHEFRDFIGKMRFQRIGVKLADHSKHGFKVRHEAIIALAGKALTAATNGAKVVDVSDEQAKEYLMGRDIPLDTAGKAQGEVIVCYGGAPLGMAKHLGNKLKNSLPRDLVKDKVLLLPPQA.

S-adenosyl-L-methionine-binding positions include 119 to 125 (ASAPGSK), glutamate 143, aspartate 170, and aspartate 188. Residue cysteine 241 is the Nucleophile of the active site.

It belongs to the class I-like SAM-binding methyltransferase superfamily. RsmB/NOP family.

It is found in the cytoplasm. The catalysed reaction is cytidine(1407) in 16S rRNA + S-adenosyl-L-methionine = 5-methylcytidine(1407) in 16S rRNA + S-adenosyl-L-homocysteine + H(+). In terms of biological role, specifically methylates the cytosine at position 1407 (m5C1407) of 16S rRNA. The sequence is that of Ribosomal RNA small subunit methyltransferase F from Shewanella sp. (strain MR-4).